Reading from the N-terminus, the 122-residue chain is Large ribosomal subunit protein uL14 (122 aa).

It belongs to the universal ribosomal protein uL14 family. Part of the 50S ribosomal subunit. Forms a cluster with proteins L3 and L19. In the 70S ribosome, L14 and L19 interact and together make contacts with the 16S rRNA in bridges B5 and B8.

Binds to 23S rRNA. Forms part of two intersubunit bridges in the 70S ribosome. This Brachyspira hyodysenteriae (strain ATCC 49526 / WA1) protein is Large ribosomal subunit protein uL14.